The sequence spans 912 residues: Lateral signaling target protein 2 homolog (912 aa).

Over residues 323–332 the composition is skewed to low complexity; that stretch reads NVNTSNNSDN. 4 disordered regions span residues 323 to 360, 455 to 610, 664 to 745, and 769 to 846; these read NVNTSNNSDNSDSRVDDSPNDELRHESETRDNRNSSFY, ADSG…ESSQ, NSSP…ASSA, and GGGS…APPR. Residues 333–355 are compositionally biased toward basic and acidic residues; the sequence is SDSRVDDSPNDELRHESETRDNR. Residues 455 to 468 show a composition bias toward polar residues; sequence ADSGLGTANPSVDN. Positions 486 to 505 are enriched in acidic residues; the sequence is SSEEGEIDEYDNEEDDEDSD. The segment covering 530–544 has biased composition (basic residues); sequence YRTHKQQHHHRHRRS. Composition is skewed to polar residues over residues 545 to 556 and 572 to 590; these read SGSIMSATSSRK and VPSNQGTSSKTYSNCDTSP. The segment covering 591 to 610 has biased composition (low complexity); sequence SSGNQSECSSTSSTTGESSQ. Basic and acidic residues predominate over residues 682 to 699; it reads DKPKEPDPTDLFEFRASE. Polar residues-rich tracts occupy residues 705 to 717, 735 to 745, 780 to 801, and 822 to 834; these read PGQNSGGSSQSIY, PGTSPIRASSA, ERSVSLSETSIVVENNGGATDS, and SRSSPNSPVNGTS. The segment at 850–910 adopts an FYVE-type zinc-finger fold; that stretch reads DGDAPRCMAC…VCRDCYVREV (61 aa). The Zn(2+) site is built by Cys856, Cys859, Cys872, Cys875, Cys880, Cys883, Cys902, and Cys905.

This sequence belongs to the lst-2 family.

Its function is as follows. Negative regulator of epidermal growth factor receptor (EGFR) signaling. This chain is Lateral signaling target protein 2 homolog, found in Aedes aegypti (Yellowfever mosquito).